Reading from the N-terminus, the 364-residue chain is UDP-N-acetylglucosamine--N-acetylmuramyl-(pentapeptide) pyrophosphoryl-undecaprenol N-acetylglucosamine transferase 1 (364 aa).

UDP-N-acetyl-alpha-D-glucosamine is bound by residues 10–12, N124, S195, I250, and Q295; that span reads TGG.

It belongs to the glycosyltransferase 28 family. MurG subfamily.

The protein resides in the cell membrane. It catalyses the reaction di-trans,octa-cis-undecaprenyl diphospho-N-acetyl-alpha-D-muramoyl-L-alanyl-D-glutamyl-meso-2,6-diaminopimeloyl-D-alanyl-D-alanine + UDP-N-acetyl-alpha-D-glucosamine = di-trans,octa-cis-undecaprenyl diphospho-[N-acetyl-alpha-D-glucosaminyl-(1-&gt;4)]-N-acetyl-alpha-D-muramoyl-L-alanyl-D-glutamyl-meso-2,6-diaminopimeloyl-D-alanyl-D-alanine + UDP + H(+). It functions in the pathway cell wall biogenesis; peptidoglycan biosynthesis. In terms of biological role, cell wall formation. Catalyzes the transfer of a GlcNAc subunit on undecaprenyl-pyrophosphoryl-MurNAc-pentapeptide (lipid intermediate I) to form undecaprenyl-pyrophosphoryl-MurNAc-(pentapeptide)GlcNAc (lipid intermediate II). This is UDP-N-acetylglucosamine--N-acetylmuramyl-(pentapeptide) pyrophosphoryl-undecaprenol N-acetylglucosamine transferase 1 from Bacillus cereus (strain ATCC 10987 / NRS 248).